A 406-amino-acid chain; its full sequence is Tryptophan synthase beta chain (406 aa).

Lys-99 is subject to N6-(pyridoxal phosphate)lysine.

This sequence belongs to the TrpB family. Tetramer of two alpha and two beta chains. Pyridoxal 5'-phosphate serves as cofactor.

It carries out the reaction (1S,2R)-1-C-(indol-3-yl)glycerol 3-phosphate + L-serine = D-glyceraldehyde 3-phosphate + L-tryptophan + H2O. It functions in the pathway amino-acid biosynthesis; L-tryptophan biosynthesis; L-tryptophan from chorismate: step 5/5. Functionally, the beta subunit is responsible for the synthesis of L-tryptophan from indole and L-serine. The polypeptide is Tryptophan synthase beta chain (trpB) (Caulobacter vibrioides (strain ATCC 19089 / CIP 103742 / CB 15) (Caulobacter crescentus)).